Here is a 493-residue protein sequence, read N- to C-terminus: Cholesteryl ester transfer protein (493 aa).

Positions 1–17 (MLAATVLTLALLGNAHA) are cleaved as a signal peptide. N-linked (GlcNAc...) (complex) asparagine glycosylation is present at Asn-105. An intrachain disulfide couples Cys-160 to Cys-201. Residues Asn-257, Asn-358, and Asn-413 are each glycosylated (N-linked (GlcNAc...) asparagine).

The protein belongs to the BPI/LBP/Plunc superfamily. BPI/LBP family. Expressed by the liver and secreted in plasma.

Its subcellular location is the secreted. The enzyme catalyses cholesteryl (9Z-octadecenoate)(in) = cholesteryl (9Z-octadecenoate)(out). It catalyses the reaction 1,2,3-tri-(9Z-octadecenoyl)-glycerol(in) = 1,2,3-tri-(9Z-octadecenoyl)-glycerol(out). The catalysed reaction is cholesteryl (9Z,12Z)-octadecadienoate(in) = cholesteryl (9Z,12Z)-octadecadienoate(out). Functionally, involved in the transfer of neutral lipids, including cholesteryl ester and triglyceride, among lipoprotein particles. Allows the net movement of cholesteryl ester from high density lipoproteins/HDL to triglyceride-rich very low density lipoproteins/VLDL, and the equimolar transport of triglyceride from VLDL to HDL. Regulates the reverse cholesterol transport, by which excess cholesterol is removed from peripheral tissues and returned to the liver for elimination. In Homo sapiens (Human), this protein is Cholesteryl ester transfer protein.